Reading from the N-terminus, the 77-residue chain is MKKLLISFIRFYQIFISPLKPPTCRFYPTCSHYGLEAVKRFGAIKGGWLTIKRILKCHPFHPGGFDPVPEKQENGKS.

Belongs to the UPF0161 family.

The protein resides in the cell membrane. Could be involved in insertion of integral membrane proteins into the membrane. The sequence is that of Putative membrane protein insertion efficiency factor from Geobacillus sp. (strain WCH70).